A 301-amino-acid polypeptide reads, in one-letter code: uncharacterized protein (301 aa).

This is an uncharacterized protein from Sinorhizobium fredii (strain NBRC 101917 / NGR234).